A 248-amino-acid chain; its full sequence is Homeotic protein ultrabithorax (248 aa).

Residues 116–125 (GTGGGGGGSA) are compositionally biased toward gly residues. The interval 116 to 191 (GTGGGGGGSA…GSAGVVGGAG (76 aa)) is disordered. Low complexity predominate over residues 126–139 (GSANGANNTANGQN). 2 stretches are compositionally biased toward gly residues: residues 140 to 152 (TSGG…GGGM) and 182 to 191 (GSAGVVGGAG). Positions 241–246 (FYPWMA) match the Antp-type hexapeptide motif.

It belongs to the Antp homeobox family.

The protein resides in the nucleus. Sequence-specific transcription factor which is part of a developmental regulatory system that provides cells with specific positional identities on the anterior-posterior axis. Binds the consensus region 5'-TTAAT[GT][GA]-3'. In Musca domestica (House fly), this protein is Homeotic protein ultrabithorax (Ubx).